Here is a 205-residue protein sequence, read N- to C-terminus: Coatomer subunit zeta-2 (205 aa).

The segment covering 1–12 (MQRPEAWPRPHP) has biased composition (basic and acidic residues). The disordered stretch occupies residues 1 to 33 (MQRPEAWPRPHPGEGASAAQAGGAAPPTRATEQ). A compositionally biased stretch (low complexity) spans 13–30 (GEGASAAQAGGAAPPTRA).

It belongs to the adaptor complexes small subunit family. Oligomeric complex.

The protein localises to the cytoplasm. It localises to the cytosol. Its subcellular location is the endoplasmic reticulum-Golgi intermediate compartment membrane. It is found in the golgi apparatus membrane. The protein resides in the cytoplasmic vesicle. The protein localises to the COPI-coated vesicle membrane. Its function is as follows. The coatomer is a cytosolic protein complex that binds to dilysine motifs and reversibly associates with Golgi non-clathrin-coated vesicles, which further mediate biosynthetic protein transport from the ER, via the Golgi up to the trans Golgi network. Coatomer complex is required for budding from Golgi membranes, and is essential for the retrograde Golgi-to-ER transport of dilysine-tagged proteins. The zeta subunit may be involved in regulating the coat assembly and, hence, the rate of biosynthetic protein transport due to its association-dissociation properties with the coatomer complex. This is Coatomer subunit zeta-2 (Copz2) from Mus musculus (Mouse).